The primary structure comprises 137 residues: ATP synthase epsilon chain, chloroplastic (137 aa).

Belongs to the ATPase epsilon chain family. In terms of assembly, F-type ATPases have 2 components, CF(1) - the catalytic core - and CF(0) - the membrane proton channel. CF(1) has five subunits: alpha(3), beta(3), gamma(1), delta(1), epsilon(1). CF(0) has three main subunits: a, b and c.

It is found in the plastid. The protein localises to the chloroplast thylakoid membrane. Functionally, produces ATP from ADP in the presence of a proton gradient across the membrane. The polypeptide is ATP synthase epsilon chain, chloroplastic (Pisum sativum (Garden pea)).